Here is an 89-residue protein sequence, read N- to C-terminus: Large ribosomal subunit protein eL34 (89 aa).

The segment at 45–71 (GIPRGRPVEMRKLPKTKKRPERPMPHL) is disordered.

This sequence belongs to the eukaryotic ribosomal protein eL34 family. As to quaternary structure, part of the 50S ribosomal subunit.

The protein is Large ribosomal subunit protein eL34 of Pyrococcus furiosus (strain ATCC 43587 / DSM 3638 / JCM 8422 / Vc1).